The sequence spans 238 residues: U2 small nuclear ribonucleoprotein A' (238 aa).

LRR repeat units lie at residues 53 to 74 (PTHILDLTNNDLIMIPDLSRRD), 75 to 95 (DIHTLLLGRNNIVEVDGRLLP), and 97 to 118 (NVQNLTLSNNSIRRFEDLQRLR). Positions 132-170 (NQVCHLANYREHVLRLVPHLETLDFQNVTAEERKSAMSF) constitute an LRRCT domain. The tract at residues 167 to 189 (AMSFPRQADGDTLGPVNTAIRDN) is disordered.

Belongs to the U2 small nuclear ribonucleoprotein A family. Belongs to the CWC complex (or CEF1-associated complex), a spliceosome sub-complex reminiscent of a late-stage spliceosome composed of the U2, U5 and U6 snRNAs and at least BUD13, BUD31, BRR2, CDC40, CEF1, CLF1, CUS1, CWC2, CWC15, CWC21, CWC22, CWC23, CWC24, CWC25, CWC27, ECM2, HSH155, IST3, ISY1, LEA1, MSL1, NTC20, PRP8, PRP9, PRP11, PRP19, PRP21, PRP22, PRP45, PRP46, SLU7, SMB1, SMD1, SMD2, SMD3, SMX2, SMX3, SNT309, SNU114, SPP2, SYF1, SYF2, RSE1 and YJU2. Interacts with MSL1.

The protein resides in the nucleus. Its function is as follows. Involved in pre-mRNA splicing. Associates to U2 snRNA in a MSL1 dependent manner and is required for normal accumulation of U2 snRNA. Required for the spliceosome assembly and the efficient addition of U2 snRNP onto the pre-mRNA. The sequence is that of U2 small nuclear ribonucleoprotein A' (LEA1) from Saccharomyces cerevisiae (strain ATCC 204508 / S288c) (Baker's yeast).